A 168-amino-acid chain; its full sequence is MAILNILEFPDPRLRTIAKPVDVVDDGIRQLVDDMFETMYEAPGIGLAATQVNVHKRVVVMDLSEDRSEPRVFINPEFEPLTDQMDQYQEGCLSVPGFYENVDRPQKVRIKALDRDGKPYELIAEGLLAVCIQHECDHLNGKLFVDYLSSLKRDRIKKKLEKIHRQQA.

Fe cation-binding residues include Cys-92 and His-134. Residue Glu-135 is part of the active site. Residue His-138 participates in Fe cation binding.

The protein belongs to the polypeptide deformylase family. Fe(2+) serves as cofactor.

It catalyses the reaction N-terminal N-formyl-L-methionyl-[peptide] + H2O = N-terminal L-methionyl-[peptide] + formate. Its function is as follows. Removes the formyl group from the N-terminal Met of newly synthesized proteins. Requires at least a dipeptide for an efficient rate of reaction. N-terminal L-methionine is a prerequisite for activity but the enzyme has broad specificity at other positions. This is Peptide deformylase from Stutzerimonas stutzeri (strain A1501) (Pseudomonas stutzeri).